We begin with the raw amino-acid sequence, 177 residues long: MSRIGKKPVPVPAGVTASVDGQIVKAKGAKGELSFVVHDEVLVKMEDGAVSVDPRDQSKEARSKWGMSRTMISNIFVGVKDGFEKKLEISGVGYRAAMQGKNLQLSLGFSHEVVYDVPAGITVAVPKPTEIVVTGIDKQQVGQVAAEIREYRGPEPYKGKGVKYAGEKIVRKEGKKK.

This sequence belongs to the universal ribosomal protein uL6 family. In terms of assembly, part of the 50S ribosomal subunit.

In terms of biological role, this protein binds to the 23S rRNA, and is important in its secondary structure. It is located near the subunit interface in the base of the L7/L12 stalk, and near the tRNA binding site of the peptidyltransferase center. The polypeptide is Large ribosomal subunit protein uL6 (Brucella anthropi (strain ATCC 49188 / DSM 6882 / CCUG 24695 / JCM 21032 / LMG 3331 / NBRC 15819 / NCTC 12168 / Alc 37) (Ochrobactrum anthropi)).